A 158-amino-acid chain; its full sequence is Ribosome-binding factor A (158 aa).

The segment at 127–158 (RQGAVHAGDADPYKESAAEEPAAYEDDERRPD) is disordered. The span at 134–143 (GDADPYKESA) shows a compositional bias: basic and acidic residues.

This sequence belongs to the RbfA family. Monomer. Binds 30S ribosomal subunits, but not 50S ribosomal subunits or 70S ribosomes.

The protein resides in the cytoplasm. One of several proteins that assist in the late maturation steps of the functional core of the 30S ribosomal subunit. Associates with free 30S ribosomal subunits (but not with 30S subunits that are part of 70S ribosomes or polysomes). Required for efficient processing of 16S rRNA. May interact with the 5'-terminal helix region of 16S rRNA. The protein is Ribosome-binding factor A of Mycobacteroides abscessus (strain ATCC 19977 / DSM 44196 / CCUG 20993 / CIP 104536 / JCM 13569 / NCTC 13031 / TMC 1543 / L948) (Mycobacterium abscessus).